We begin with the raw amino-acid sequence, 507 residues long: Nucleoporin p54 (507 aa).

9 tandem repeats follow at residues 5 to 6, 25 to 26, 28 to 29, 53 to 54, 61 to 62, 63 to 64, 67 to 68, 87 to 88, and 444 to 445. The segment at 5 to 445 is 9 X 2 AA repeats of F-G; that stretch reads FGAPSGTSGT…SQIRMQNHFG (441 aa).

Belongs to the NUP54 family. Component of the p62 complex, a complex composed of NUP62, NUP54, and the isoform p58 and isoform p45 of NUP58. Interacts with NUTF2. In terms of processing, O-glycosylated.

It localises to the nucleus. It is found in the nuclear pore complex. The protein resides in the nucleus membrane. Component of the nuclear pore complex, a complex required for the trafficking across the nuclear membrane. In Homo sapiens (Human), this protein is Nucleoporin p54 (NUP54).